The chain runs to 102 residues: Glutaredoxin 1 (102 aa).

The region spanning 1–96 (MNKAILHTII…KLLENQPKTT (96 aa)) is the Glutaredoxin domain. An intrachain disulfide couples C17 to C20.

This sequence belongs to the glutaredoxin family. In terms of assembly, monomer.

It is found in the cytoplasm. Has a glutathione-disulfide oxidoreductase activity in the presence of NADPH and glutathione reductase. Reduces low molecular weight disulfides and proteins. The polypeptide is Glutaredoxin 1 (grxC1) (Rickettsia conorii (strain ATCC VR-613 / Malish 7)).